A 328-amino-acid chain; its full sequence is Putative potassium channel protein YugO (328 aa).

3 consecutive transmembrane segments (helical) span residues Ile19 to Pro39, Phe42 to Gly62, and Ala73 to Leu93. An RCK N-terminal domain is found at Arg114–Gly238.

It localises to the cell membrane. This chain is Putative potassium channel protein YugO (yugO), found in Bacillus subtilis (strain 168).